The sequence spans 133 residues: MARVKRGVTAHAKHKKVLKAAKGFYGRRKNTIRIAKQAVEKSLQYAYRDRKNRKRNFRALWIQRINAATREHGLTYGRFIDGLNKAGIEIDRKVLADMAVHEPQAFAALVAKSKASLEYLKNTTPNAFESAVA.

This sequence belongs to the bacterial ribosomal protein bL20 family.

In terms of biological role, binds directly to 23S ribosomal RNA and is necessary for the in vitro assembly process of the 50S ribosomal subunit. It is not involved in the protein synthesizing functions of that subunit. The polypeptide is Large ribosomal subunit protein bL20 (Chelativorans sp. (strain BNC1)).